A 63-amino-acid chain; its full sequence is Conotoxin Gm5.1 (63 aa).

A signal peptide spans 1 to 21; sequence MRYLPVFVILLLLIASIPSDT. The propeptide occupies 22 to 50; the sequence is VQLKTKDDMPLASFHGNGRRILRMLSNKR.

The protein belongs to the conotoxin T superfamily. In terms of processing, contains 2 disulfide bonds that can be either 'C1-C3, C2-C4' or 'C1-C4, C2-C3', since these disulfide connectivities have been observed for conotoxins with cysteine framework V (for examples, see AC P0DQQ7 and AC P81755). As to expression, expressed by the venom duct.

Its subcellular location is the secreted. In Conus gloriamaris (Glory-of-the-Sea cone), this protein is Conotoxin Gm5.1.